Consider the following 532-residue polypeptide: 2,3-bisphosphoglycerate-independent phosphoglycerate mutase (532 aa).

Residues Asp15 and Ser65 each contribute to the Mn(2+) site. Catalysis depends on Ser65, which acts as the Phosphoserine intermediate. Substrate is bound by residues His126, 156-157, Arg188, Arg194, 258-261, and Lys331; these read RD and RPDR. Mn(2+) is bound by residues Asp398, His402, Asp439, His440, and His457.

The protein belongs to the BPG-independent phosphoglycerate mutase family. In terms of assembly, monomer. It depends on Mn(2+) as a cofactor.

The enzyme catalyses (2R)-2-phosphoglycerate = (2R)-3-phosphoglycerate. The protein operates within carbohydrate degradation; glycolysis; pyruvate from D-glyceraldehyde 3-phosphate: step 3/5. Its function is as follows. Catalyzes the interconversion of 2-phosphoglycerate and 3-phosphoglycerate. This chain is 2,3-bisphosphoglycerate-independent phosphoglycerate mutase, found in Gloeothece citriformis (strain PCC 7424) (Cyanothece sp. (strain PCC 7424)).